Consider the following 302-residue polypeptide: Haloalkane dehalogenase (302 aa).

Positions 48–152 (PILLMHGEPS…VVVSNTGLPI (105 aa)) constitute an AB hydrolase-1 domain. Aspartate 123 acts as the Nucleophile in catalysis. Catalysis depends on aspartate 249, which acts as the Proton donor. Histidine 278 serves as the catalytic Proton acceptor.

This sequence belongs to the haloalkane dehalogenase family. Type 1 subfamily. Monomer.

It catalyses the reaction 1-haloalkane + H2O = a halide anion + a primary alcohol + H(+). Catalyzes hydrolytic cleavage of carbon-halogen bonds in halogenated aliphatic compounds, leading to the formation of the corresponding primary alcohols, halide ions and protons. The chain is Haloalkane dehalogenase from Caulobacter vibrioides (strain ATCC 19089 / CIP 103742 / CB 15) (Caulobacter crescentus).